The chain runs to 396 residues: tRNA (guanine-N(7)-)-methyltransferase non-catalytic subunit wdr4 (396 aa).

4 WD repeats span residues histidine 52–serine 91, tryptophan 94–arginine 133, glycine 137–cysteine 178, and glycine 180–serine 220.

This sequence belongs to the WD repeat TRM82 family. As to quaternary structure, non-catalytic component of the METTL1-WDR4 complex, composed of mettl1 and wdr4.

The protein localises to the nucleus. It functions in the pathway tRNA modification; N(7)-methylguanine-tRNA biosynthesis. In terms of biological role, non-catalytic component of the METTL1-WDR4 methyltransferase complex required for the formation of N(7)-methylguanine in a subset of RNA species, such as tRNAs, mRNAs and microRNAs (miRNAs). In the METTL1-WDR4 methyltransferase complex, wdr4 acts as a scaffold for tRNA-binding. Required for the formation of N(7)-methylguanine at position 46 (m7G46) in a large subset of tRNAs that contain the 5'-RAGGU-3' motif within the variable loop. M7G46 interacts with C13-G22 in the D-loop to stabilize tRNA tertiary structure and protect tRNAs from decay. Also required for the formation of N(7)-methylguanine at internal sites in a subset of mRNAs. Also required for methylation of a specific subset of miRNAs. This Xenopus laevis (African clawed frog) protein is tRNA (guanine-N(7)-)-methyltransferase non-catalytic subunit wdr4 (wdr4).